The sequence spans 428 residues: Elongation factor 1-alpha (428 aa).

One can recognise a tr-type G domain in the interval 5-225 (KPILNVAFIG…DAFQPPEKPT (221 aa)). The G1 stretch occupies residues 14–21 (GHVDAGKS). 14–21 (GHVDAGKS) lines the GTP pocket. Position 21 (Ser21) interacts with Mg(2+). A G2 region spans residues 70 to 74 (GVTID). A G3 region spans residues 91 to 94 (DCPG). GTP is bound by residues 91 to 95 (DCPGH) and 149 to 152 (NKMD). The segment at 149-152 (NKMD) is G4. A G5 region spans residues 189 to 191 (ASL).

This sequence belongs to the TRAFAC class translation factor GTPase superfamily. Classic translation factor GTPase family. EF-Tu/EF-1A subfamily.

The protein localises to the cytoplasm. The enzyme catalyses GTP + H2O = GDP + phosphate + H(+). Its function is as follows. GTP hydrolase that promotes the GTP-dependent binding of aminoacyl-tRNA to the A-site of ribosomes during protein biosynthesis. In Methanococcus maripaludis (strain C6 / ATCC BAA-1332), this protein is Elongation factor 1-alpha.